The primary structure comprises 1048 residues: Transcription factor mef2A (1048 aa).

One can recognise an MADS-box domain in the interval 1-61 (MGRNKITIEK…NKLFQYSSRD (61 aa)). Residues 74-85 (DNTRKNLTNQDY) show a composition bias toward polar residues. Disordered regions lie at residues 74 to 263 (DNTR…QAAQ), 294 to 339 (QQQH…QQQQ), 386 to 812 (GIYG…NINT), and 916 to 1048 (LLLT…EPKN). Over residues 97–110 (DDEDGDDDGDEDLG) the composition is skewed to acidic residues. Low complexity-rich tracts occupy residues 130–205 (NNNN…NANH), 212–263 (GNSA…QAAQ), 294–303 (QQQHQQQQQN), 327–339 (QQQQ…QQQQ), 393–437 (PPQM…IMNK), 446–466 (YYDY…NSNG), and 481–500 (QQQS…HQSP). The stretch at 249–304 (NNNSNGYQQQQQAAQQAVQQAQMAQQMHLQQQQQYQQLQHIQQQQQQQHQQQQQNM) forms a coiled coil. A compositionally biased stretch (polar residues) spans 506 to 522 (YSPQQQSPVLNSQNGHH). Residues 529–539 (HQMHHQQHQHQ) show a composition bias toward basic residues. Positions 540-593 (QHPQMQQQQQQQQQHQQHPQMQQIQQQQHPQMQQHQQHQQQHPQMQQQHMNNHQ) are enriched in low complexity. The segment covering 600–618 (NSSPEINSQKNVHSSPLIM) has biased composition (polar residues). Low complexity predominate over residues 619–699 (NSNNNNNNNN…NSNNGNNNNN (81 aa)). Residues 715-736 (SSPTIPEQPSINVSTSSNSAHV) show a composition bias toward polar residues. 3 stretches are compositionally biased toward low complexity: residues 738-802 (NNIT…SSST), 924-960 (SNNS…SSSS), and 982-1029 (NNNN…NNSN).

It is found in the nucleus. Transcription factor that regulates cell differentiation during development. Seems to negatively regulate prestalk gene expression and positively regulate prespore gene expression. This Dictyostelium discoideum (Social amoeba) protein is Transcription factor mef2A (mef2A).